The following is a 331-amino-acid chain: Protein-methionine-sulfoxide reductase catalytic subunit MsrP (331 aa).

The tat-type signal signal peptide spans 1–57 (MLIKKTLRAALAGDDIPRSEITPRAVFEHRRRILQAAGAAAAGGLVGAHGLALAAYA). Mo-molybdopterin contacts are provided by residues Asn-90, 93–94 (YE), Cys-148, Thr-183, Asn-231, Arg-236, and 247–249 (SAK).

This sequence belongs to the MsrP family. Heterodimer of a catalytic subunit (MsrP) and a heme-binding subunit (MsrQ). The cofactor is Mo-molybdopterin. In terms of processing, predicted to be exported by the Tat system. The position of the signal peptide cleavage has not been experimentally proven.

Its subcellular location is the periplasm. The enzyme catalyses L-methionyl-[protein] + a quinone + H2O = L-methionyl-(S)-S-oxide-[protein] + a quinol. The catalysed reaction is L-methionyl-[protein] + a quinone + H2O = L-methionyl-(R)-S-oxide-[protein] + a quinol. Part of the MsrPQ system that repairs oxidized periplasmic proteins containing methionine sulfoxide residues (Met-O), using respiratory chain electrons. Thus protects these proteins from oxidative-stress damage caused by reactive species of oxygen and chlorine generated by the host defense mechanisms. MsrPQ is essential for the maintenance of envelope integrity under bleach stress, rescuing a wide series of structurally unrelated periplasmic proteins from methionine oxidation. The catalytic subunit MsrP is non-stereospecific, being able to reduce both (R-) and (S-) diastereoisomers of methionine sulfoxide. The polypeptide is Protein-methionine-sulfoxide reductase catalytic subunit MsrP (Burkholderia mallei (strain ATCC 23344)).